The primary structure comprises 89 residues: Small ribosomal subunit protein uS15 (89 aa).

Residues 1 to 11 (MSIAAERKAEV) are compositionally biased toward basic and acidic residues. The disordered stretch occupies residues 1-24 (MSIAAERKAEVIKTNATKAGDTGS).

Belongs to the universal ribosomal protein uS15 family. Part of the 30S ribosomal subunit. Forms a bridge to the 50S subunit in the 70S ribosome, contacting the 23S rRNA.

Its function is as follows. One of the primary rRNA binding proteins, it binds directly to 16S rRNA where it helps nucleate assembly of the platform of the 30S subunit by binding and bridging several RNA helices of the 16S rRNA. In terms of biological role, forms an intersubunit bridge (bridge B4) with the 23S rRNA of the 50S subunit in the ribosome. The chain is Small ribosomal subunit protein uS15 from Bradyrhizobium diazoefficiens (strain JCM 10833 / BCRC 13528 / IAM 13628 / NBRC 14792 / USDA 110).